The sequence spans 135 residues: Transcription antitermination protein NusB (135 aa).

It belongs to the NusB family.

Involved in transcription antitermination. Required for transcription of ribosomal RNA (rRNA) genes. Binds specifically to the boxA antiterminator sequence of the ribosomal RNA (rrn) operons. The chain is Transcription antitermination protein NusB from Nocardioides sp. (strain ATCC BAA-499 / JS614).